A 427-amino-acid chain; its full sequence is Glutamate-1-semialdehyde 2,1-aminomutase (427 aa).

The residue at position 265 (Lys265) is an N6-(pyridoxal phosphate)lysine.

The protein belongs to the class-III pyridoxal-phosphate-dependent aminotransferase family. HemL subfamily. In terms of assembly, homodimer. It depends on pyridoxal 5'-phosphate as a cofactor.

It localises to the cytoplasm. The catalysed reaction is (S)-4-amino-5-oxopentanoate = 5-aminolevulinate. It functions in the pathway porphyrin-containing compound metabolism; protoporphyrin-IX biosynthesis; 5-aminolevulinate from L-glutamyl-tRNA(Glu): step 2/2. In Neisseria meningitidis serogroup C (strain 053442), this protein is Glutamate-1-semialdehyde 2,1-aminomutase.